A 191-amino-acid polypeptide reads, in one-letter code: Large ribosomal subunit protein bL9c (191 aa).

The transit peptide at methionine 1–alanine 35 directs the protein to the chloroplast.

Belongs to the bacterial ribosomal protein bL9 family. Part of the 50S ribosomal subunit.

Its subcellular location is the plastid. The protein localises to the chloroplast. Its function is as follows. Binds to the 23S rRNA. The sequence is that of Large ribosomal subunit protein bL9c (RPL9) from Triticum aestivum (Wheat).